Consider the following 69-residue polypeptide: MMSKLGVLLTICLLLFPLSALPLDGDQPADQPAERVQDISPDQNPLFHLVKRGCCPYPKCIHVTFCKCC.

Residues 1-20 form the signal peptide; the sequence is MMSKLGVLLTICLLLFPLSA. A propeptide spanning residues 21–52 is cleaved from the precursor; sequence LPLDGDQPADQPAERVQDISPDQNPLFHLVKR. 3 disulfide bridges follow: C54/C68, C55/C66, and C60/C69.

This sequence belongs to the conotoxin M superfamily. Expressed by the venom duct.

The protein localises to the secreted. This chain is Conotoxin reg3.6, found in Conus regius (Crown cone).